The chain runs to 51 residues: Large ribosomal subunit protein eL39 (51 aa).

Belongs to the eukaryotic ribosomal protein eL39 family. In terms of assembly, interacts with YIH1.

In Kluyveromyces lactis (strain ATCC 8585 / CBS 2359 / DSM 70799 / NBRC 1267 / NRRL Y-1140 / WM37) (Yeast), this protein is Large ribosomal subunit protein eL39 (RPL39).